A 139-amino-acid polypeptide reads, in one-letter code: Putative pre-16S rRNA nuclease (139 aa).

The protein belongs to the YqgF nuclease family.

The protein resides in the cytoplasm. Could be a nuclease involved in processing of the 5'-end of pre-16S rRNA. This is Putative pre-16S rRNA nuclease from Haemophilus influenzae (strain PittEE).